A 492-amino-acid chain; its full sequence is Lysine--tRNA ligase (492 aa).

Mg(2+)-binding residues include Glu403 and Glu410.

This sequence belongs to the class-II aminoacyl-tRNA synthetase family. Homodimer. Mg(2+) serves as cofactor.

It is found in the cytoplasm. It carries out the reaction tRNA(Lys) + L-lysine + ATP = L-lysyl-tRNA(Lys) + AMP + diphosphate. The sequence is that of Lysine--tRNA ligase from Mycoplasmoides gallisepticum (strain R(low / passage 15 / clone 2)) (Mycoplasma gallisepticum).